Reading from the N-terminus, the 82-residue chain is MANNKKDEQAAAATPISRLGYEACRDELIEVVRQLEQGGLDLDASLNLWERGEQLAKRCEEHLAGARKRIEDALAAGEADDD.

It belongs to the XseB family. As to quaternary structure, heterooligomer composed of large and small subunits.

The protein resides in the cytoplasm. It carries out the reaction Exonucleolytic cleavage in either 5'- to 3'- or 3'- to 5'-direction to yield nucleoside 5'-phosphates.. Its function is as follows. Bidirectionally degrades single-stranded DNA into large acid-insoluble oligonucleotides, which are then degraded further into small acid-soluble oligonucleotides. The chain is Exodeoxyribonuclease 7 small subunit from Mycobacterium avium (strain 104).